The following is a 251-amino-acid chain: 3-deoxy-manno-octulosonate cytidylyltransferase (251 aa).

It belongs to the KdsB family.

The protein localises to the cytoplasm. It carries out the reaction 3-deoxy-alpha-D-manno-oct-2-ulosonate + CTP = CMP-3-deoxy-beta-D-manno-octulosonate + diphosphate. It functions in the pathway nucleotide-sugar biosynthesis; CMP-3-deoxy-D-manno-octulosonate biosynthesis; CMP-3-deoxy-D-manno-octulosonate from 3-deoxy-D-manno-octulosonate and CTP: step 1/1. It participates in bacterial outer membrane biogenesis; lipopolysaccharide biosynthesis. Functionally, activates KDO (a required 8-carbon sugar) for incorporation into bacterial lipopolysaccharide in Gram-negative bacteria. The polypeptide is 3-deoxy-manno-octulosonate cytidylyltransferase (Alcanivorax borkumensis (strain ATCC 700651 / DSM 11573 / NCIMB 13689 / SK2)).